The primary structure comprises 369 residues: Anhydro-N-acetylmuramic acid kinase (369 aa).

12-19 (GTSMDGVD) serves as a coordination point for ATP.

Belongs to the anhydro-N-acetylmuramic acid kinase family.

It carries out the reaction 1,6-anhydro-N-acetyl-beta-muramate + ATP + H2O = N-acetyl-D-muramate 6-phosphate + ADP + H(+). Its pathway is amino-sugar metabolism; 1,6-anhydro-N-acetylmuramate degradation. The protein operates within cell wall biogenesis; peptidoglycan recycling. Functionally, catalyzes the specific phosphorylation of 1,6-anhydro-N-acetylmuramic acid (anhMurNAc) with the simultaneous cleavage of the 1,6-anhydro ring, generating MurNAc-6-P. Is required for the utilization of anhMurNAc either imported from the medium or derived from its own cell wall murein, and thus plays a role in cell wall recycling. In Shewanella sp. (strain ANA-3), this protein is Anhydro-N-acetylmuramic acid kinase.